Here is a 169-residue protein sequence, read N- to C-terminus: Peptide deformylase (169 aa).

2 residues coordinate Fe cation: Cys-91 and His-133. The active site involves Glu-134. Residue His-137 participates in Fe cation binding.

This sequence belongs to the polypeptide deformylase family. Requires Fe(2+) as cofactor.

It carries out the reaction N-terminal N-formyl-L-methionyl-[peptide] + H2O = N-terminal L-methionyl-[peptide] + formate. Its function is as follows. Removes the formyl group from the N-terminal Met of newly synthesized proteins. Requires at least a dipeptide for an efficient rate of reaction. N-terminal L-methionine is a prerequisite for activity but the enzyme has broad specificity at other positions. This is Peptide deformylase from Salmonella arizonae (strain ATCC BAA-731 / CDC346-86 / RSK2980).